Here is a 375-residue protein sequence, read N- to C-terminus: Peptide chain release factor 1 (375 aa).

At Gln-237 the chain carries N5-methylglutamine. The span at 289–299 (AAREAQERQER) shows a compositional bias: basic and acidic residues. Residues 289–326 (AAREAQERQERASQVGSGDRSEKIRTYNYPQNRVTDHR) form a disordered region.

Belongs to the prokaryotic/mitochondrial release factor family. In terms of processing, methylated by PrmC. Methylation increases the termination efficiency of RF1.

It localises to the cytoplasm. In terms of biological role, peptide chain release factor 1 directs the termination of translation in response to the peptide chain termination codons UAG and UAA. The sequence is that of Peptide chain release factor 1 (prfA) from Deinococcus radiodurans (strain ATCC 13939 / DSM 20539 / JCM 16871 / CCUG 27074 / LMG 4051 / NBRC 15346 / NCIMB 9279 / VKM B-1422 / R1).